The sequence spans 317 residues: Alkylsulfatase (317 aa).

H78 is a binding site for substrate. Residues H105 and D107 each contribute to the Fe cation site. V108 lines the substrate pocket. Position 132 (T132) interacts with 2-oxoglutarate. Position 261 (H261) interacts with Fe cation. 2 residues coordinate 2-oxoglutarate: R272 and R276.

It belongs to the TfdA dioxygenase family. Homotetramer. The cofactor is Fe(2+).

Functionally, alpha-ketoglutarate-dependent dioxygenase that in vitro catalyzes the oxygenolytic release of sulfite from hexylsulfate. The polypeptide is Alkylsulfatase (Acinetobacter baylyi (strain ATCC 33305 / BD413 / ADP1)).